Here is a 456-residue protein sequence, read N- to C-terminus: tRNA(Ile)-lysidine synthase (456 aa).

Residue 28–33 (SGGSDS) participates in ATP binding.

Belongs to the tRNA(Ile)-lysidine synthase family.

It is found in the cytoplasm. The enzyme catalyses cytidine(34) in tRNA(Ile2) + L-lysine + ATP = lysidine(34) in tRNA(Ile2) + AMP + diphosphate + H(+). Its function is as follows. Ligates lysine onto the cytidine present at position 34 of the AUA codon-specific tRNA(Ile) that contains the anticodon CAU, in an ATP-dependent manner. Cytidine is converted to lysidine, thus changing the amino acid specificity of the tRNA from methionine to isoleucine. The protein is tRNA(Ile)-lysidine synthase of Brucella anthropi (strain ATCC 49188 / DSM 6882 / CCUG 24695 / JCM 21032 / LMG 3331 / NBRC 15819 / NCTC 12168 / Alc 37) (Ochrobactrum anthropi).